We begin with the raw amino-acid sequence, 289 residues long: Thioredoxin-like protein 1 (289 aa).

In terms of domain architecture, Thioredoxin spans 2–109; sequence VGVKPVGSDP…EEKIKQHLEN (108 aa). Cysteines 34 and 37 form a disulfide. Ser-113 is modified (phosphoserine). In terms of domain architecture, PITH spans 115-285; that stretch reads EDTDIPKGYM…NDFKRVVGKK (171 aa).

As to quaternary structure, component of the 19S regulatory cap of the 26S proteasome. Interacts with PSMD14/RPN11. Interacts with, and reduces EEF1A1. As to expression, ubiquitous.

Its subcellular location is the cytoplasm. The protein resides in the nucleus. Its function is as follows. Active thioredoxin with a redox potential of about -250 mV. This is Thioredoxin-like protein 1 (TXNL1) from Homo sapiens (Human).